Consider the following 417-residue polypeptide: DNA primase small subunit (417 aa).

At M1 the chain carries N-acetylmethionine. Catalysis depends on residues E44, D109, and D111. Residues D109 and D111 each contribute to the Mg(2+) site. The Mn(2+) site is built by D109 and D111. D109–D111 serves as a coordination point for a ribonucleoside 5'-triphosphate. Zn(2+) contacts are provided by C121, C122, C128, and C131. The Zinc knuckle motif motif lies at C121 to C131. An a ribonucleoside 5'-triphosphate-binding site is contributed by S160–H166. Residue D305 coordinates Mg(2+). D305 contributes to the Mn(2+) binding site. A ribonucleoside 5'-triphosphate is bound by residues H314 to K317 and H323.

The protein belongs to the eukaryotic-type primase small subunit family. Heterodimer of a catalytic subunit PRIM1 and a regulatory subunit PRIM2, also known as the DNA primase complex. Interacts with PRIM2/p58 (via C-terminus). Component of the alpha DNA polymerase complex (also known as the alpha DNA polymerase-primase complex) consisting of four subunits: the catalytic subunit POLA1, the regulatory subunit POLA2, and the primase complex subunits PRIM1 and PRIM2 respectively. Within the complex, POLA1 directly interacts with PRIM2. Requires Mg(2+) as cofactor. It depends on Mn(2+) as a cofactor.

It catalyses the reaction ssDNA + n NTP = ssDNA/pppN(pN)n-1 hybrid + (n-1) diphosphate.. Its activity is regulated as follows. The presence of the regulatory subunit PRIM2/p58 accelerates the kinetics of initiation and primer extension. Functionally, catalytic subunit of the DNA primase complex and component of the DNA polymerase alpha complex (also known as the alpha DNA polymerase-primase complex) which play an essential role in the initiation of DNA synthesis. During the S phase of the cell cycle, the DNA polymerase alpha complex (composed of a catalytic subunit POLA1, an accessory subunit POLA2 and two primase subunits, the catalytic subunit PRIM1 and the regulatory subunit PRIM2) is recruited to DNA at the replicative forks via direct interactions with MCM10 and WDHD1. The primase subunit of the polymerase alpha complex initiates DNA synthesis by oligomerising short RNA primers on both leading and lagging strands. These primers are initially extended by the polymerase alpha catalytic subunit and subsequently transferred to polymerase delta and polymerase epsilon for processive synthesis on the lagging and leading strand, respectively. In the primase complex, both subunits are necessary for the initial di-nucleotide formation, but the extension of the primer depends only on the catalytic subunit. Can add both ribo- and deoxynucleotides during elongation of the primers. Synthesizes 9-mer RNA primers (also known as the 'unit length' RNA primers). Incorporates only ribonucleotides in the presence of ribo- and deoxy-nucleotide triphosphates (rNTPs, dNTPs). Requires template thymine or cytidine to start the RNA primer synthesis, with an adenine or guanine at its 5'-end. Binds single stranded DNA. This chain is DNA primase small subunit (Prim1), found in Mus musculus (Mouse).